The primary structure comprises 1260 residues: MASACGAPGPGAGPGAALGSPAPAWYHRDLSRAAAEELLARAGRDGSFLVRDSESVAGAFALCVLYQKHVHTYRILPDGEDFLAVQTSQGVPVRRFQTLGELIGLYAQPNQGLVCALLLPVERERELDPPDERDASDGEDEKPPLPPRSGTSVSAPLGPSSPPAAPEPPTPAVESAPNGLSTVSHEYLKGSYGLDLEAVRGGASNLPHLTRTLAASCRRLHSEVDKVLSGLEILSKVFDQQSSPMVTRLLQQQNPPQTGEQELESLVLKLSVLKDFLSGIQKKALKALQDMSSTAPPAPVQPSTRKAKTIPVQAFEVKLDVTLGDLTKIGKSQKFTLSVDVEGGRLVLLRRQRDSQEDWTTFTHDRIRQLIKSQRVQNKLGVVFEKEKERTQRKDFIFVSARKREAFCQLLQLMKNKHSKQDEPDMISVFIGTWNMGSVPPPRNVTSWFTSKGLGKTLDEVTVTIPHDIYVFGTQENSVGDREWLDLLRGGLKELTDLDYRPIAMQSLWNIKVAVLVKPEHENRISHVSTSSVKTGIANTLGNKGAVGVSFMFNGTSFGFVNCHLTSGNEKTARRNQNYLDILRLLSLGDRQLGAFDISLRFTHLFWFGDLNYRLDMDIQEILNYISRKEFEPLLRVDQLNLEREKHKVFLRFSEEEISFPPTYRYERGSRDTYAWHKQKPTGVRTNVPSWCDRILWKSHPETHIICNSYGCTDDIVTSDHSPVFGTFEVGVTSQFISKKGLSKTADQAYIEFESIEAIVKTASRTKFFIEFYSTCLEEYKKSFENDAQSSDNVNFLKVQWSSRQLPTLKPILDIEYLQDQHLLLTVKSMDGYESYGECVVALKSMIGSTAQQFLTFLSHRGEETGNIRGSMKVRVPTERLGTRERLYEWISIDKDEAGAKSKAPSVSRGSQEPRSGSRKPAPAEASCPLSKLFEEPEKPPPTGRPPAPPRAAPREEPLTPRLKPEGAPEPEGVAAPPPKNSFNNPAYYVLEGVPHQLLPPEPPSPARAPVPPATKNKVAITVPAPQLGRHRPPRVGEGSSSDEESGGTLPPPDFPPPPLPDSAIFLPPSREPLPGPGVRGRSGGEARALPPPKAHPRPPLPPGPLPPGTFLGEAAGGDDRSCSVLQVAKKLSEVDSAPPGPGRCLLLPGPLELQPARALPSDYGRPLSFPPPRIRESVQEDLAEEAPCPQAGRTGGLGEAGMGAWLRAIGLERYEEGLVHNGWDDLEFLSDITEEDLEEAGVQDPAHKRLLLDTLQLSK.

The 97-residue stretch at 25-121 (WYHRDLSRAA…GLVCALLLPV (97 aa)) folds into the SH2 domain. Basic and acidic residues predominate over residues 126–136 (ELDPPDERDAS). A disordered region spans residues 126–178 (ELDPPDERDASDGEDEKPPLPPRSGTSVSAPLGPSSPPAAPEPPTPAVESAPN). Ser-136 is subject to Phosphoserine. A compositionally biased stretch (pro residues) spans 159–171 (PSSPPAAPEPPTP). 2 positions are modified to phosphoserine: Ser-243 and Ser-355. At Tyr-888 the chain carries Phosphotyrosine. Phosphoserine is present on Ser-892. A disordered region spans residues 899–1120 (GAKSKAPSVS…FLGEAAGGDD (222 aa)). The span at 940-952 (PPPTGRPPAPPRA) shows a compositional bias: pro residues. Positions 946–951 (PPAPPR) match the SH3-binding motif. Positions 953 to 967 (APREEPLTPRLKPEG) are enriched in basic and acidic residues. Phosphothreonine is present on Thr-960. Residues 985–988 (NPAY) carry the NPXY motif motif. Tyr-988 is subject to Phosphotyrosine. Composition is skewed to pro residues over residues 998-1013 (LLPP…PVPP), 1050-1061 (LPPPDFPPPPLP), and 1090-1108 (LPPP…PLPP). Position 1133 is a phosphoserine (Ser-1133). Tyr-1164 is modified (phosphotyrosine). Residues 1181–1200 (EDLAEEAPCPQAGRTGGLGE) are disordered. In terms of domain architecture, SAM spans 1198–1260 (LGEAGMGAWL…LLLDTLQLSK (63 aa)). The residue at position 1259 (Ser-1259) is a Phosphoserine.

The protein belongs to the inositol 1,4,5-trisphosphate 5-phosphatase family. As to quaternary structure, interacts with tyrosine phosphorylated form of SHC1. Interacts with EGFR. Upon stimulation by the EGF signaling pathway, it forms a complex with SHC1 and EGFR. Interacts with cytoskeletal protein SORBS3/vinexin, promoting its localization to the periphery of cells. Forms a complex with filamin (FLNA or FLNB), actin, GPIb (GP1BA or GP1BB) that regulates cortical and submembraneous actin. Interacts with c-Met/MET, when c-Met/MET is phosphorylated on 'Tyr-1356'. Interacts with p130Cas/BCAR1. Interacts with CENTD3/ARAP3 via its SAM domain. Interacts with c-Cbl/CBL and CAP/SORBS1. Interacts with activated EPHA2 receptor. Interacts with receptor FCGR2A. Interacts with receptor FCGR2B. Interacts with tyrosine kinase ABL1. Interacts with tyrosine kinase TEC. Interacts with CSF1R. Interacts (via N-terminus) with SH3YL1 (via SH3 domain). Interacts with FCRL6 (tyrosine phosphorylated form). Interacts (via SH2 domain) with tyrosine phosphorylated KLRC1 (via ITIM). Interacts with NEDD9/HEF1. Post-translationally, tyrosine phosphorylated by the members of the SRC family after exposure to a diverse array of extracellular stimuli such as insulin, growth factors such as EGF or PDGF, chemokines, integrin ligands and hypertonic and oxidative stress. May be phosphorylated upon IgG receptor FCGR2B-binding. Phosphorylated at Tyr-988 following cell attachment and spreading. Phosphorylated at Tyr-1164 following EGF signaling pathway stimulation. Expressed abundantly in skeletal muscle tissue.

It localises to the cytoplasm. The protein resides in the cytosol. The protein localises to the cytoskeleton. Its subcellular location is the membrane. It is found in the cell projection. It localises to the filopodium. The protein resides in the lamellipodium. The protein localises to the basal cell membrane. Its subcellular location is the nucleus. It is found in the nucleus speckle. It localises to the spindle pole. It carries out the reaction a 1,2-diacyl-sn-glycero-3-phospho-(1D-myo-inositol-3,4,5-trisphosphate) + H2O = a 1,2-diacyl-sn-glycero-3-phospho-(1D-myo-inositol-3,4-bisphosphate) + phosphate. The catalysed reaction is 1,2-dioctanoyl-sn-glycero-3-phospho-(1D-myo-inositol-3,4,5-trisphosphate) + H2O = 1,2-dioctanoyl-sn-glycero-3-phospho-(1D-myo-inositol-3,4-bisphosphate) + phosphate. The enzyme catalyses 1,2-dihexadecanoyl-sn-glycero-3-phospho-(1D-myo-inositol-3,4,5-trisphosphate) + H2O = 1,2-dihexadecanoyl-sn-glycero-3-phospho-(1D-myo-inositol-3,4-bisphosphate) + phosphate. With respect to regulation, activated upon translocation to the sites of synthesis of PtdIns(3,4,5)P3 in the membrane. Enzymatic activity is enhanced in the presence of phosphatidylserine. In terms of biological role, phosphatidylinositol (PtdIns) phosphatase that specifically hydrolyzes the 5-phosphate of phosphatidylinositol-3,4,5-trisphosphate (PtdIns(3,4,5)P3) to produce PtdIns(3,4)P2, thereby negatively regulating the PI3K (phosphoinositide 3-kinase) pathways. Required for correct mitotic spindle orientation and therefore progression of mitosis. Plays a central role in regulation of PI3K-dependent insulin signaling, although the precise molecular mechanisms and signaling pathways remain unclear. While overexpression reduces both insulin-stimulated MAP kinase and Akt activation, its absence does not affect insulin signaling or GLUT4 trafficking. Confers resistance to dietary obesity. May act by regulating AKT2, but not AKT1, phosphorylation at the plasma membrane. Part of a signaling pathway that regulates actin cytoskeleton remodeling. Required for the maintenance and dynamic remodeling of actin structures as well as in endocytosis, having a major impact on ligand-induced EGFR internalization and degradation. Participates in regulation of cortical and submembraneous actin by hydrolyzing PtdIns(3,4,5)P3 thereby regulating membrane ruffling. Regulates cell adhesion and cell spreading. Required for HGF-mediated lamellipodium formation, cell scattering and spreading. Acts as a negative regulator of EPHA2 receptor endocytosis by inhibiting via PI3K-dependent Rac1 activation. Acts as a regulator of neuritogenesis by regulating PtdIns(3,4,5)P3 level and is required to form an initial protrusive pattern, and later, maintain proper neurite outgrowth. Acts as a negative regulator of the FC-gamma-RIIA receptor (FCGR2A). Mediates signaling from the FC-gamma-RIIB receptor (FCGR2B), playing a central role in terminating signal transduction from activating immune/hematopoietic cell receptor systems. Involved in EGF signaling pathway. Upon stimulation by EGF, it is recruited by EGFR and dephosphorylates PtdIns(3,4,5)P3. Plays a negative role in regulating the PI3K-PKB pathway, possibly by inhibiting PKB activity. Down-regulates Fc-gamma-R-mediated phagocytosis in macrophages independently of INPP5D/SHIP1. In macrophages, down-regulates NF-kappa-B-dependent gene transcription by regulating macrophage colony-stimulating factor (M-CSF)-induced signaling. Plays a role in the localization of AURKA and NEDD9/HEF1 to the basolateral membrane at interphase in polarized cysts, thereby mediates cell cycle homeostasis, cell polarization and cilia assembly. Additionally promotion of cilia growth is also facilitated by hydrolysis of (PtdIns(3,4,5)P3) to PtdIns(3,4)P2. Promotes formation of apical membrane-initiation sites during the initial stages of lumen formation via Rho family-induced actin filament organization and CTNNB1 localization to cell-cell contacts. May also hydrolyze PtdIns(1,3,4,5)P4, and could thus affect the levels of the higher inositol polyphosphates like InsP6. Involved in endochondral ossification. This is Phosphatidylinositol 3,4,5-trisphosphate 5-phosphatase 2 from Sus scrofa (Pig).